Here is an 879-residue protein sequence, read N- to C-terminus: Putative ankyrin repeat protein L88 (879 aa).

ANK repeat units follow at residues 22 to 62, 63 to 96, 100 to 133, 137 to 170, 174 to 207, 211 to 241, 245 to 278, 282 to 313, 317 to 347, 351 to 384, 387 to 420, 424 to 463, 470 to 499, 506 to 542, 546 to 578, 674 to 704, and 708 to 738; these read KGFT…QKNK, KGYT…KTNI, EGIT…DINA, NGYT…NIDD, NGLT…DINA, NGRT…DIEA, KGLT…NIEA, KLRT…NIET, RNNT…NINH, EGCN…NINN, SERT…DPNI, NGNT…NPNF, NSLT…DINS, SALL…DVNI, NGNT…NPNT, SGIT…DPNI, and KGET…NPYI.

The protein is Putative ankyrin repeat protein L88 of Acanthamoeba polyphaga mimivirus (APMV).